A 482-amino-acid chain; its full sequence is UDP-N-acetylmuramate--L-alanine ligase (482 aa).

129–135 contributes to the ATP binding site; sequence GTHGKTT.

The protein belongs to the MurCDEF family.

It localises to the cytoplasm. The enzyme catalyses UDP-N-acetyl-alpha-D-muramate + L-alanine + ATP = UDP-N-acetyl-alpha-D-muramoyl-L-alanine + ADP + phosphate + H(+). It functions in the pathway cell wall biogenesis; peptidoglycan biosynthesis. Its function is as follows. Cell wall formation. The polypeptide is UDP-N-acetylmuramate--L-alanine ligase (Acinetobacter baylyi (strain ATCC 33305 / BD413 / ADP1)).